The chain runs to 97 residues: Small ribosomal subunit protein bS20 (97 aa).

Belongs to the bacterial ribosomal protein bS20 family.

In terms of biological role, binds directly to 16S ribosomal RNA. In Prochlorococcus marinus (strain MIT 9515), this protein is Small ribosomal subunit protein bS20.